The following is a 498-amino-acid chain: ATP synthase subunit beta, chloroplastic (498 aa).

Residue 172–179 (GGAGVGKT) coordinates ATP.

Belongs to the ATPase alpha/beta chains family. In terms of assembly, F-type ATPases have 2 components, CF(1) - the catalytic core - and CF(0) - the membrane proton channel. CF(1) has five subunits: alpha(3), beta(3), gamma(1), delta(1), epsilon(1). CF(0) has four main subunits: a(1), b(1), b'(1) and c(9-12).

The protein localises to the plastid. Its subcellular location is the chloroplast thylakoid membrane. It catalyses the reaction ATP + H2O + 4 H(+)(in) = ADP + phosphate + 5 H(+)(out). Functionally, produces ATP from ADP in the presence of a proton gradient across the membrane. The catalytic sites are hosted primarily by the beta subunits. In Balaka seemannii, this protein is ATP synthase subunit beta, chloroplastic.